Here is a 652-residue protein sequence, read N- to C-terminus: MSSERPDEEKPETRDVLRVQDLIHGGGGASPVQSPTRLGPTRFSEVAGDKILNTGSNCIGSVLSWINGDPNRNLKNPVKRAKRKRIRTAKTAAFVIVLVGFFIFVNWFMLSQLHEGRAWLRRGFSKKTNLKPKLNPDPNSSVKRVSVKVSANVQHKEKKKMGKPKKTYNGTYGRLLAYAAHALAEGQNKLEPKELWREPKDQALAWKPCADQRSWKPSDGKNGYIMVTANGGINQQRVAVCNIVVVARMLNATLVIPKFMFSDVWTDASQFGDIYQVEHFIKYLSPDIRIVKKLPKELQSLDLEAIGSVVTDIDVMKEAKPGFYMKHILPLLLKNRVVHFLGFGNRLAFDPIPFELQRLRCRCNFHALNFVPKIQETGAILVRRLRDSGSHLAPVDPYLVGPKFASFILDKKAGPLHKASKYLAVHLRFEIDMVAHSLCYFGGGDAEKAELDAYREKHFPTLANLTKTQKMPSPDDLRTEGLCPLSPEEAVLMLAGLGFSRKTRVFVAGANIYGGNKRLAALTSLYPNLVTKENVLSQTELEPFKNFSSQLAVLDFIACAASDAFAMTDSGSQLSSLVSGYRIYYGAGKMPTIRPNKRRFSDILLKNNTIEWKVFEQRVRKTVRQTKHVLVRPTGRSVYRYPRCKECMCNED.

A helical; Signal-anchor for type II membrane protein membrane pass occupies residues 91 to 111 (TAAFVIVLVGFFIFVNWFMLS). N-linked (GlcNAc...) asparagine glycosylation is found at N139, N169, and N251. 426–428 (HLR) provides a ligand contact to substrate. Residues N464, N546, and N607 are each glycosylated (N-linked (GlcNAc...) asparagine).

It belongs to the glycosyltransferase GT106 family.

The protein localises to the membrane. It functions in the pathway glycan metabolism. This chain is O-fucosyltransferase 15, found in Arabidopsis thaliana (Mouse-ear cress).